We begin with the raw amino-acid sequence, 291 residues long: N-acetylmannosamine kinase (291 aa).

ATP contacts are provided by residues 5-12 (AVDIGGTK) and 132-139 (GVGGGIVV). The Zn(2+) site is built by His156, Cys166, Cys168, and Cys173.

It belongs to the ROK (NagC/XylR) family. NanK subfamily. Homodimer.

The enzyme catalyses an N-acyl-D-mannosamine + ATP = an N-acyl-D-mannosamine 6-phosphate + ADP + H(+). The protein operates within amino-sugar metabolism; N-acetylneuraminate degradation; D-fructose 6-phosphate from N-acetylneuraminate: step 2/5. Its function is as follows. Catalyzes the phosphorylation of N-acetylmannosamine (ManNAc) to ManNAc-6-P. The chain is N-acetylmannosamine kinase (nanK2) from Escherichia coli O6:H1 (strain CFT073 / ATCC 700928 / UPEC).